A 219-amino-acid chain; its full sequence is Small ribosomal subunit protein eS1 (219 aa).

It belongs to the eukaryotic ribosomal protein eS1 family. As to quaternary structure, component of the small ribosomal subunit. Mature ribosomes consist of a small (40S) and a large (60S) subunit. The 40S subunit contains about 33 different proteins and 1 molecule of RNA (18S). The 60S subunit contains about 49 different proteins and 3 molecules of RNA (25S, 5.8S and 5S).

The protein localises to the cytoplasm. In Guillardia theta (Cryptophyte), this protein is Small ribosomal subunit protein eS1.